The following is a 455-amino-acid chain: Beta-cyclopiazonate dehydrogenase (455 aa).

A signal peptide spans 1 to 25 (MAVRIARFLGLSTVAYLALANGIDA).

It belongs to the beta-cyclopiazonate dehydrogenase family. Requires FAD as cofactor.

It catalyses the reaction beta-cyclopiazonate + A = alpha-cyclopiazonate + AH2. Beta-cyclopiazonate dehydrogenase involved in the synthesis of the fungal neurotoxin alpha-cyclopiazonic acid (CPA). CpaO carries out the dehydrogenation of beta-CPA to yield an unstable enimine product, which is captured by intramolecular cyclization to create the pentacyclic fused scaffold of alpha-cyclopiazonate. The protein is Beta-cyclopiazonate dehydrogenase of Aspergillus oryzae (strain ATCC 42149 / RIB 40) (Yellow koji mold).